The chain runs to 26 residues: Dermaseptin-J3 (26 aa).

At V26 the chain carries Valine amide.

In terms of tissue distribution, expressed by the skin glands.

The protein resides in the secreted. In terms of biological role, has antimicrobial activity. In Phasmahyla jandaia (Jandaia leaf frog), this protein is Dermaseptin-J3.